The sequence spans 701 residues: Putative pectinesterase/pectinesterase inhibitor 43 (701 aa).

Positions 1-22 (MNKYVLLGVTALIMAMVICVEA) are cleaved as a signal peptide. Residues 42 to 195 (MITKTTVSII…QHLTSNGLAI (154 aa)) form a pectinesterase inhibitor 43 region. 2 stretches are compositionally biased toward low complexity: residues 221 to 256 (GILGSGSSRDESVGSSQDSPPNEDSSDDSPSTVDSS) and 263 to 275 (SSSENQSSDSSNN). Residues 221 to 351 (GILGSGSSRD…DPLRKLNPLN (131 aa)) are disordered. Residue Asn267 is glycosylated (N-linked (GlcNAc...) asparagine). Composition is skewed to polar residues over residues 276–287 (RPLDSSKNQQME) and 313–338 (QKSTSSENQPLDSSENPPQKSTSSEN). Residues 391 to 688 (NVVVAKDGSG…FAPGNFLRGN (298 aa)) are pectinesterase 43. Residues Thr467 and Gln497 each contribute to the substrate site. The active-site Proton donor; for pectinesterase activity is the Asp520. A disulfide bridge connects residues Cys534 and Cys554. Residue Asp541 is the Nucleophile; for pectinesterase activity of the active site. Substrate is bound by residues Arg609 and Trp611. Residue Asn637 is glycosylated (N-linked (GlcNAc...) asparagine).

The protein in the N-terminal section; belongs to the PMEI family. It in the C-terminal section; belongs to the pectinesterase family. As to expression, expressed in flower buds.

It localises to the secreted. The protein localises to the cell wall. It carries out the reaction [(1-&gt;4)-alpha-D-galacturonosyl methyl ester](n) + n H2O = [(1-&gt;4)-alpha-D-galacturonosyl](n) + n methanol + n H(+). Its pathway is glycan metabolism; pectin degradation; 2-dehydro-3-deoxy-D-gluconate from pectin: step 1/5. Acts in the modification of cell walls via demethylesterification of cell wall pectin. In Arabidopsis thaliana (Mouse-ear cress), this protein is Putative pectinesterase/pectinesterase inhibitor 43 (PME43).